We begin with the raw amino-acid sequence, 524 residues long: MADEFGNGDALDLPVGKDAVNSLIRENSHIFSDTQCKVCSAVLISESQKLAHYQSRKHANKVRRYMAINQGEDSVPAKKFKAAPAEISDGEDRSKCCPVCNMTFSSPVVAESHYIGKTHIKNLRLREQGGVKEGMVNQAKKTRTPTVATKSDNKMDHSDRAKFCKLCHSTFNNPLMAEQHYAGKKHKKQETKTQIMTIYTSSGQTPAQAPIPLNLNSPMPGSGSAGKGFSCDKCNIVLNSIEQYQAHVSGAKHKNQLMSMTPLSEEGHQAVVAPSAIASGSAGKGFSCDTCNIVLNSIEQYQAHISGAKHKNHLKSMTPLSEEGHTAAVAPSAFASGSAGKGFSCDTCNIVLNSIEQYQAHISGAKHKNHLMSMTPLSEEGHTAAVAPSAFASGSAGKGFSCDTCNIVLNSIEQYQAHVSGAKHKNQLMSMTPSSEEGLPSAVGPSAFASPLSAGGALSSGGPSGRGFCPSGDLTPKGPSSFGSLPPLGSLLPPLYPPAHSSQPYVHDDTMSPDGYNYFNEDFE.

7 Matrin-type zinc fingers span residues 34-64 (TQCK…KVRR), 92-126 (DRSK…LRLR), 162-192 (KFCK…QETK), 226-260 (GKGF…LMSM), 286-316 (FSCD…HLKS), 343-373 (FSCD…HLMS), and 400-430 (FSCD…QLMS). Residues cysteine 36, cysteine 39, histidine 52, histidine 58, cysteine 97, cysteine 100, histidine 113, and histidine 119 each coordinate Zn(2+). Disordered regions lie at residues 453 to 486 (SAGG…GSLP) and 494 to 513 (PLYP…TMSP). The segment covering 476–486 (PKGPSSFGSLP) has biased composition (low complexity).

It localises to the nucleus. It is found in the cytoplasm. In terms of biological role, binds preferentially to dsRNA, but also to RNA-DNA hybrids. This Xenopus laevis (African clawed frog) protein is Zinc finger protein 346.